Consider the following 131-residue polypeptide: Fumarate reductase subunit C (131 aa).

A run of 3 helical transmembrane segments spans residues 30–50, 57–77, and 109–129; these read EGTA…LFAL, WMGF…LIAL, and IIKG…YVAL.

The protein belongs to the FrdC family. As to quaternary structure, part of an enzyme complex containing four subunits: a flavoprotein (FrdA), an iron-sulfur protein (FrdB), and two hydrophobic anchor proteins (FrdC and FrdD).

The protein resides in the cell inner membrane. Functionally, two distinct, membrane-bound, FAD-containing enzymes are responsible for the catalysis of fumarate and succinate interconversion; fumarate reductase is used in anaerobic growth, and succinate dehydrogenase is used in aerobic growth. Anchors the catalytic components of the fumarate reductase complex to the cell inner membrane, binds quinones. This chain is Fumarate reductase subunit C, found in Citrobacter koseri (strain ATCC BAA-895 / CDC 4225-83 / SGSC4696).